Reading from the N-terminus, the 395-residue chain is MSTPKSASFFTRKNILAFSFFIAFLVVVSVLVTVFFLDIKTGDVKTIINTINRTNWPWILLIVLGIVVTLAWNIIINWWVARRFCFHAPWWEWVLFACVVQFFQIVTPLSLGQDPFRLYWFIKKGMKKQTAVLLVTSTGAFWNLAQALITWPSFFVLSQNYALLEQNHEGFVSYWFSFAGMIFDVVVAILFIFIAYSKRMHVLIYSGVNQFRKWIKRPYLTKEQIYQRFIDKAEFNKLYGLEIKRLGLTIFKLLANILIAVVGYFSVFAVFAIVKKENATNNVIDQYSTADIFNITNIAITASNFIPVPSGEGATQFVMTSFLNAFKSAVGIESQVKQGVFLWRFLSVYIPAILFSLCFIGWVVQVVIEFKHPKPVLPTVNLINHHFWNNKKLHN.

Helical transmembrane passes span 15-35 (ILAF…VTVF), 56-76 (WPWI…NIII), 86-106 (FHAP…FQIV), 131-151 (AVLL…LITW), 175-195 (WFSF…IFIA), 254-274 (LANI…FAIV), 298-318 (IAIT…TQFV), and 348-368 (VYIP…QVVI).

The protein localises to the cell membrane. This is an uncharacterized protein from Mycoplasma pneumoniae (strain ATCC 29342 / M129 / Subtype 1) (Mycoplasmoides pneumoniae).